The sequence spans 178 residues: Large ribosomal subunit protein uL6 (178 aa).

It belongs to the universal ribosomal protein uL6 family. In terms of assembly, part of the 50S ribosomal subunit.

This protein binds to the 23S rRNA, and is important in its secondary structure. It is located near the subunit interface in the base of the L7/L12 stalk, and near the tRNA binding site of the peptidyltransferase center. This is Large ribosomal subunit protein uL6 from Opitutus terrae (strain DSM 11246 / JCM 15787 / PB90-1).